The following is a 222-amino-acid chain: UPF0758 protein Lcho_0695 (222 aa).

The 123-residue stretch at 100-222 (VFDSPQAVRD…VVSFAERGLL (123 aa)) folds into the MPN domain. Positions 171, 173, and 184 each coordinate Zn(2+). A JAMM motif motif is present at residues 171 to 184 (HNHPSGVAEPSRAD).

It belongs to the UPF0758 family.

The polypeptide is UPF0758 protein Lcho_0695 (Leptothrix cholodnii (strain ATCC 51168 / LMG 8142 / SP-6) (Leptothrix discophora (strain SP-6))).